Consider the following 277-residue polypeptide: 3-methyl-2-oxobutanoate hydroxymethyltransferase (277 aa).

2 residues coordinate Mg(2+): D49 and D88. 3-methyl-2-oxobutanoate is bound by residues 49–50, D88, and K118; that span reads DS. E120 is a binding site for Mg(2+). Catalysis depends on E186, which acts as the Proton acceptor.

Belongs to the PanB family. In terms of assembly, homodecamer; pentamer of dimers. Requires Mg(2+) as cofactor.

The protein localises to the cytoplasm. The enzyme catalyses 3-methyl-2-oxobutanoate + (6R)-5,10-methylene-5,6,7,8-tetrahydrofolate + H2O = 2-dehydropantoate + (6S)-5,6,7,8-tetrahydrofolate. The protein operates within cofactor biosynthesis; (R)-pantothenate biosynthesis; (R)-pantoate from 3-methyl-2-oxobutanoate: step 1/2. In terms of biological role, catalyzes the reversible reaction in which hydroxymethyl group from 5,10-methylenetetrahydrofolate is transferred onto alpha-ketoisovalerate to form ketopantoate. The sequence is that of 3-methyl-2-oxobutanoate hydroxymethyltransferase from Cereibacter sphaeroides (strain ATCC 17025 / ATH 2.4.3) (Rhodobacter sphaeroides).